We begin with the raw amino-acid sequence, 182 residues long: RNA pyrophosphohydrolase (182 aa).

A Nudix hydrolase domain is found at 6 to 149 (GYRPNVGIIL…KRLVYEQALN (144 aa)). The short motif at 38–59 (GGIKRGETPEEAMFRELYEEVG) is the Nudix box element. The tract at residues 162 to 182 (PRHKKEQEPFSDVVDSVRSEE) is disordered.

It belongs to the Nudix hydrolase family. RppH subfamily. A divalent metal cation is required as a cofactor.

In terms of biological role, accelerates the degradation of transcripts by removing pyrophosphate from the 5'-end of triphosphorylated RNA, leading to a more labile monophosphorylated state that can stimulate subsequent ribonuclease cleavage. This is RNA pyrophosphohydrolase from Dechloromonas aromatica (strain RCB).